A 296-amino-acid chain; its full sequence is Undecaprenyl-diphosphatase (296 aa).

7 consecutive transmembrane segments (helical) span residues 48-68 (SAFT…AWVF), 104-124 (LTLW…LLFD), 131-151 (LFSV…MIFA), 167-187 (ITFF…WPGF), 208-228 (SDFT…LSLV), 237-257 (SHIP…LLSI), and 272-292 (FAIY…GFGI).

Belongs to the UppP family.

It is found in the cell membrane. The enzyme catalyses di-trans,octa-cis-undecaprenyl diphosphate + H2O = di-trans,octa-cis-undecaprenyl phosphate + phosphate + H(+). Its function is as follows. Catalyzes the dephosphorylation of undecaprenyl diphosphate (UPP). Confers resistance to bacitracin. The polypeptide is Undecaprenyl-diphosphatase (Staphylococcus carnosus (strain TM300)).